A 535-amino-acid chain; its full sequence is tRNA-2-methylthio-N(6)-dimethylallyladenosine synthase (535 aa).

The 116-residue stretch at 24–139 (RTYEVRTFGC…LPRLLERARH (116 aa)) folds into the MTTase N-terminal domain. [4Fe-4S] cluster is bound by residues Cys-33, Cys-68, Cys-102, Cys-176, Cys-180, and Cys-183. A Radical SAM core domain is found at 162–392 (RDSSFSGWVS…IALQERISLE (231 aa)). A TRAM domain is found at 395 to 465 (EKLIGRDVEL…PHYLIADAAG (71 aa)). The interval 512–535 (RTREPLTSPGVGTMPLYDPTDGQR) is disordered.

Belongs to the methylthiotransferase family. MiaB subfamily. Monomer. It depends on [4Fe-4S] cluster as a cofactor.

The protein resides in the cytoplasm. It carries out the reaction N(6)-dimethylallyladenosine(37) in tRNA + (sulfur carrier)-SH + AH2 + 2 S-adenosyl-L-methionine = 2-methylsulfanyl-N(6)-dimethylallyladenosine(37) in tRNA + (sulfur carrier)-H + 5'-deoxyadenosine + L-methionine + A + S-adenosyl-L-homocysteine + 2 H(+). In terms of biological role, catalyzes the methylthiolation of N6-(dimethylallyl)adenosine (i(6)A), leading to the formation of 2-methylthio-N6-(dimethylallyl)adenosine (ms(2)i(6)A) at position 37 in tRNAs that read codons beginning with uridine. This Leifsonia xyli subsp. xyli (strain CTCB07) protein is tRNA-2-methylthio-N(6)-dimethylallyladenosine synthase.